Here is a 544-residue protein sequence, read N- to C-terminus: Chaperonin GroEL 2 (544 aa).

ATP contacts are provided by residues 29–32, 86–90, Gly-413, 482–484, and Asp-498; these read TLGP, DGTTT, and NVL.

The protein belongs to the chaperonin (HSP60) family. Forms a cylinder of 14 subunits composed of two heptameric rings stacked back-to-back. Interacts with the co-chaperonin GroES.

It is found in the cytoplasm. The catalysed reaction is ATP + H2O + a folded polypeptide = ADP + phosphate + an unfolded polypeptide.. Its function is as follows. Together with its co-chaperonin GroES, plays an essential role in assisting protein folding. The GroEL-GroES system forms a nano-cage that allows encapsulation of the non-native substrate proteins and provides a physical environment optimized to promote and accelerate protein folding. In Roseiflexus sp. (strain RS-1), this protein is Chaperonin GroEL 2.